The sequence spans 247 residues: Protein GrpE (247 aa).

2 disordered regions span residues 1–64 (MNDE…QALD) and 214–247 (SMGPGPKDDGEETITEQSLEGDNTTDQQSSEKSD). 3 stretches are compositionally biased toward polar residues: residues 30–39 (DEPSLSNVAE), 49–63 (DVTSSDAKDSSSQAL), and 228–241 (TEQSLEGDNTTDQQ).

It belongs to the GrpE family. Homodimer.

The protein localises to the cytoplasm. Functionally, participates actively in the response to hyperosmotic and heat shock by preventing the aggregation of stress-denatured proteins, in association with DnaK and GrpE. It is the nucleotide exchange factor for DnaK and may function as a thermosensor. Unfolded proteins bind initially to DnaJ; upon interaction with the DnaJ-bound protein, DnaK hydrolyzes its bound ATP, resulting in the formation of a stable complex. GrpE releases ADP from DnaK; ATP binding to DnaK triggers the release of the substrate protein, thus completing the reaction cycle. Several rounds of ATP-dependent interactions between DnaJ, DnaK and GrpE are required for fully efficient folding. The sequence is that of Protein GrpE from Prochlorococcus marinus (strain MIT 9211).